Here is an 82-residue protein sequence, read N- to C-terminus: Putative membrane protein insertion efficiency factor (82 aa).

The tract at residues 61-82 is disordered; the sequence is HEGGYDPVPKRKNKNSEGKREE.

This sequence belongs to the UPF0161 family.

It localises to the cell inner membrane. Its function is as follows. Could be involved in insertion of integral membrane proteins into the membrane. In Fusobacterium nucleatum subsp. nucleatum (strain ATCC 25586 / DSM 15643 / BCRC 10681 / CIP 101130 / JCM 8532 / KCTC 2640 / LMG 13131 / VPI 4355), this protein is Putative membrane protein insertion efficiency factor.